A 610-amino-acid chain; its full sequence is UvrABC system protein C (610 aa).

A GIY-YIG domain is found at 16–94; it reads SQPGVYRMYD…IKLYQPRYNV (79 aa). Positions 204–239 constitute a UVR domain; that stretch reads DQVLTQLISRMETASQNLEFEEAARIRDQIQAVRRV.

This sequence belongs to the UvrC family. As to quaternary structure, interacts with UvrB in an incision complex.

The protein localises to the cytoplasm. Its function is as follows. The UvrABC repair system catalyzes the recognition and processing of DNA lesions. UvrC both incises the 5' and 3' sides of the lesion. The N-terminal half is responsible for the 3' incision and the C-terminal half is responsible for the 5' incision. The protein is UvrABC system protein C of Escherichia coli (strain UTI89 / UPEC).